We begin with the raw amino-acid sequence, 224 residues long: uncharacterized protein (224 aa).

In terms of biological role, the presence of the two linear plasmids, termed pGKL1 and pGKL2, in strains of Kluyveromyces lactis confers the killer phenotype to the host cell, by promoting the secretion of a toxin able to inhibit the growth of sensitive strains. This is an uncharacterized protein from Kluyveromyces lactis (strain ATCC 8585 / CBS 2359 / DSM 70799 / NBRC 1267 / NRRL Y-1140 / WM37) (Yeast).